A 296-amino-acid polypeptide reads, in one-letter code: METSQPHNAESMSQDLSELLKEATKEVHEQAENTPFMKNFQKGQVSLHEFKLVTASLYFIYSALEEEIERNKDNPVYAPVYFPMELHRKAALEKDLEYFYGSNWRAEIPCPEATQKYVERLHVVGKKHPELLVAHAYTRYLGDLSGGQVLKKIAQKALQLPSTGEGLAFFTFDGVSNATKFKQLYRSRMNALEMDHATKKRVLEEAKKAFLLNIQVFEALQKLVSKSQENGHAVQPKAELRTRSVNKSHENSPAAGKESERTSRMQADMLTTSPLVRWLLALGFIATTVAVGLFAM.

The Cytoplasmic portion of the chain corresponds to 1–273 (METSQPHNAE…RMQADMLTTS (273 aa)). Residues lysine 21, histidine 28, tyrosine 137, and arginine 186 each contribute to the heme b site. Residues 231 to 264 (GHAVQPKAELRTRSVNKSHENSPAAGKESERTSR) are disordered. Over residues 238-250 (AELRTRSVNKSHE) the composition is skewed to basic and acidic residues. The chain crosses the membrane as a helical; Anchor for type IV membrane protein span at residues 274 to 296 (PLVRWLLALGFIATTVAVGLFAM).

This sequence belongs to the heme oxygenase family. In terms of assembly, homodimer and higher order homooligomer. Oligomerization is crucial for its stability and function in the endoplasmic reticulum. Post-translationally, a soluble form arises by proteolytic removal of the membrane anchor.

The protein resides in the endoplasmic reticulum membrane. It carries out the reaction heme b + 3 reduced [NADPH--hemoprotein reductase] + 3 O2 = biliverdin IXalpha + CO + Fe(2+) + 3 oxidized [NADPH--hemoprotein reductase] + 3 H2O + H(+). Its activity is regulated as follows. Inhibited by metalloporphyrins in the following order of decreasing potency: tin mesoporphyrin &gt; tin protoporphyrin &gt; zinc protoporphyrin &gt; manganese protoporphyrin &gt; cobalt protoporphyrin. In terms of biological role, catalyzes the oxidative cleavage of heme at the alpha-methene bridge carbon, released as carbon monoxide (CO), to generate biliverdin IXalpha, while releasing the central heme iron chelate as ferrous iron. Affords protection against programmed cell death and this cytoprotective effect relies on its ability to catabolize free heme and prevent it from sensitizing cells to undergo apoptosis. Its function is as follows. Catalyzes the oxidative cleavage of heme at the alpha-methene bridge carbon, released as carbon monoxide (CO), to generate biliverdin IXalpha, while releasing the central heme iron chelate as ferrous iron. This Gallus gallus (Chicken) protein is Heme oxygenase 1 (HMOX1).